The primary structure comprises 764 residues: Serine/threonine-protein kinase MPS1 (764 aa).

Disordered regions lie at residues 66 to 95, 197 to 216, and 258 to 316; these read EEMD…SSHS, ELPL…RNTD, and QAAL…KSSI. Residues 85-95 are compositionally biased toward low complexity; that stretch reads TSGHTSTSSHS. The segment covering 201–216 has biased composition (basic and acidic residues); that stretch reads EDSHQTNFKETKRNTD. Composition is skewed to low complexity over residues 272 to 292 and 306 to 315; these read KSRS…KDNS and STGSSSSKSS. Residues 440–720 form the Protein kinase domain; the sequence is YEKIELLGRG…LSSTFLQPFM (281 aa). ATP contacts are provided by residues 446–454 and Lys-468; that span reads LGRGGSSRV. Residue Asp-563 is the Proton acceptor of the active site.

Belongs to the protein kinase superfamily. Ser/Thr protein kinase family. Post-translationally, autophosphorylated.

The catalysed reaction is L-seryl-[protein] + ATP = O-phospho-L-seryl-[protein] + ADP + H(+). The enzyme catalyses L-threonyl-[protein] + ATP = O-phospho-L-threonyl-[protein] + ADP + H(+). It catalyses the reaction L-tyrosyl-[protein] + ATP = O-phospho-L-tyrosyl-[protein] + ADP + H(+). In terms of biological role, involved in mitotic spindle assembly checkpoint signaling, a process that delays anaphase until chromosomes are bioriented on the spindle, and in the repair of incorrect mitotic kinetochore-spindle microtubule attachments. Phosphorylates SPC105 on MELT motifs; phosphorylation is required for recruitment of the BUB1-BUB3 complex to kinetochores. Phosphorylates CNN1, which contributes to the enrichment of CNN1 on anaphase kinetochores. Implicated in spindle pole body (SPD) duplication. Phosphorylates the SPC29 and SPC110 spindle pole body components. The polypeptide is Serine/threonine-protein kinase MPS1 (MPS1) (Saccharomyces cerevisiae (strain ATCC 204508 / S288c) (Baker's yeast)).